Reading from the N-terminus, the 179-residue chain is NADH-quinone oxidoreductase subunit B (179 aa).

Cys52, Cys53, Cys117, and Cys147 together coordinate [4Fe-4S] cluster.

Belongs to the complex I 20 kDa subunit family. In terms of assembly, NDH-1 is composed of 14 different subunits. Subunits NuoB, C, D, E, F, and G constitute the peripheral sector of the complex. Requires [4Fe-4S] cluster as cofactor.

It localises to the cell inner membrane. The enzyme catalyses a quinone + NADH + 5 H(+)(in) = a quinol + NAD(+) + 4 H(+)(out). NDH-1 shuttles electrons from NADH, via FMN and iron-sulfur (Fe-S) centers, to quinones in the respiratory chain. The immediate electron acceptor for the enzyme in this species is believed to be ubiquinone. Couples the redox reaction to proton translocation (for every two electrons transferred, four hydrogen ions are translocated across the cytoplasmic membrane), and thus conserves the redox energy in a proton gradient. The chain is NADH-quinone oxidoreductase subunit B from Ehrlichia chaffeensis (strain ATCC CRL-10679 / Arkansas).